A 325-amino-acid polypeptide reads, in one-letter code: Eukaryotic translation initiation factor 3 subunit I (325 aa).

WD repeat units follow at residues 8-47, 50-91, 144-183, and 186-225; these read GHERSITQIKYNREGDLLFTVAKDPIVNVWYSVNGERLGT, GHTG…ALLK, CNDSKITSAVWGPLGECIIAGHESGELNQYSAKSGEVLVN, and EHSRQINDIQLSRDMTMFVTASKDNTAKLFDSTTLEHQKT. A Phosphothreonine modification is found at threonine 219. Position 264 is an N6-acetyllysine (lysine 264). Lysine 282 participates in a covalent cross-link: Glycyl lysine isopeptide (Lys-Gly) (interchain with G-Cter in ubiquitin). Residues 283 to 324 form a WD 5 repeat; it reads GHFGLINSVAFHPDGKSYSSGGEDGYVRIHYFDPQYFEFEFE. At tyrosine 308 the chain carries Phosphotyrosine.

The protein belongs to the eIF-3 subunit I family. Component of the eukaryotic translation initiation factor 3 (eIF-3) complex, which is composed of 13 subunits: EIF3A, EIF3B, EIF3C, EIF3D, EIF3E, EIF3F, EIF3G, EIF3H, EIF3I, EIF3J, EIF3K, EIF3L and EIF3M. The eIF-3 complex appears to include 3 stable modules: module A is composed of EIF3A, EIF3B, EIF3G and EIF3I; module B is composed of EIF3F, EIF3H, and EIF3M; and module C is composed of EIF3C, EIF3D, EIF3E, EIF3K and EIF3L. EIF3C of module C binds EIF3B of module A and EIF3H of module B, thereby linking the three modules. EIF3J is a labile subunit that binds to the eIF-3 complex via EIF3B. The eIF-3 complex interacts with RPS6KB1 under conditions of nutrient depletion. Mitogenic stimulation leads to binding and activation of a complex composed of MTOR and RPTOR, leading to phosphorylation and release of RPS6KB1 and binding of EIF4B to eIF-3. Phosphorylated by TGF-beta type II receptor.

Its subcellular location is the cytoplasm. Functionally, component of the eukaryotic translation initiation factor 3 (eIF-3) complex, which is required for several steps in the initiation of protein synthesis. The eIF-3 complex associates with the 40S ribosome and facilitates the recruitment of eIF-1, eIF-1A, eIF-2:GTP:methionyl-tRNAi and eIF-5 to form the 43S pre-initiation complex (43S PIC). The eIF-3 complex stimulates mRNA recruitment to the 43S PIC and scanning of the mRNA for AUG recognition. The eIF-3 complex is also required for disassembly and recycling of post-termination ribosomal complexes and subsequently prevents premature joining of the 40S and 60S ribosomal subunits prior to initiation. The eIF-3 complex specifically targets and initiates translation of a subset of mRNAs involved in cell proliferation, including cell cycling, differentiation and apoptosis, and uses different modes of RNA stem-loop binding to exert either translational activation or repression. The chain is Eukaryotic translation initiation factor 3 subunit I from Pongo abelii (Sumatran orangutan).